Here is a 160-residue protein sequence, read N- to C-terminus: Putative antiporter subunit mnhE2 (160 aa).

3 helical membrane passes run 22-42, 55-75, and 100-120; these read HFKFSTFFSGYLIGLIVIYIL, IWVAIKFLGVYLYQLITSSIS, and SDWSITFLTILIIITPGSTVI.

This sequence belongs to the CPA3 antiporters (TC 2.A.63) subunit E family. May form a heterooligomeric complex that consists of seven subunits: mnhA2, mnhB2, mnhC2, mnhD2, mnhE2, mnhF2 and mnhG2.

The protein resides in the cell membrane. In Staphylococcus aureus (strain USA300), this protein is Putative antiporter subunit mnhE2 (mnhE2).